Here is a 359-residue protein sequence, read N- to C-terminus: PFDAPGVIKGQGTIGTEINRQLKDIHAVFVPVGGGGLISGVAAYFTQVAPHTKIIGVEPYGAASMTLSLYEGHRVKLENVDTFADGVAVALVGEYTFAKCQELIDGMVLVRNDGISAAIKDVYDEGRNILETSGAVAIAGAAAYCEFYNIKNENIVAIASGANMDFSKLHKVTELAELGSDNEALLATFMIEQPGSFKTFAKLVGSMNITEVTYRFTSERKEALVLYRVDVDEKSDLEEMIKKLNSSNMKTFNFSHNELVAEHIKHLVGGSASISDEIFGEFIFPEKAGTLSTFLEAFSPRWNITLCRYRDQGDINGNVLVGFQVPQSEMDEFKSQADGLGYPYELDNSNEAFNIVVAE.

2 consecutive ACT-like domains span residues 184-256 (ALLA…NFSH) and 278-349 (IFGE…LDNS).

This sequence belongs to the serine/threonine dehydratase family. Homotetramer. The cofactor is pyridoxal 5'-phosphate. In terms of tissue distribution, floral buds of untreated plants. After ABA treatment or mechanical wounding is mostly accumulated in leaves, to a lesser extent in stems, but not in roots. Expressed in anthers, carpel leaves, pith cells, sepals and petals. Not expressed in stomium, vascular bundles, epidermal cells or pollen mother cells.

The protein localises to the plastid. The protein resides in the chloroplast. The catalysed reaction is L-threonine = 2-oxobutanoate + NH4(+). It functions in the pathway amino-acid biosynthesis; L-isoleucine biosynthesis; 2-oxobutanoate from L-threonine: step 1/1. The sequence is that of Threonine dehydratase biosynthetic, chloroplastic from Solanum tuberosum (Potato).